A 168-amino-acid chain; its full sequence is Ribosome maturation factor RimM (168 aa).

In terms of domain architecture, PRC barrel spans 95 to 166 (EHEFYYSDII…RIQITPMEGL (72 aa)).

Belongs to the RimM family. In terms of assembly, binds ribosomal protein uS19.

It is found in the cytoplasm. Functionally, an accessory protein needed during the final step in the assembly of 30S ribosomal subunit, possibly for assembly of the head region. Essential for efficient processing of 16S rRNA. May be needed both before and after RbfA during the maturation of 16S rRNA. It has affinity for free ribosomal 30S subunits but not for 70S ribosomes. This is Ribosome maturation factor RimM from Staphylococcus saprophyticus subsp. saprophyticus (strain ATCC 15305 / DSM 20229 / NCIMB 8711 / NCTC 7292 / S-41).